The primary structure comprises 163 residues: Large ribosomal subunit protein uL13m (163 aa).

An N-acetylserine modification is found at serine 2. Residues 2-4 constitute a propeptide that is removed on maturation; that stretch reads SQK.

Belongs to the universal ribosomal protein uL13 family. Component of the mitochondrial large ribosomal subunit (mt-LSU). Mature yeast 74S mitochondrial ribosomes consist of a small (37S) and a large (54S) subunit. The 37S small subunit contains a 15S ribosomal RNA (15S mt-rRNA) and 34 different proteins. The 54S large subunit contains a 21S rRNA (21S mt-rRNA) and 46 different proteins.

It localises to the mitochondrion. In terms of biological role, component of the mitochondrial ribosome (mitoribosome), a dedicated translation machinery responsible for the synthesis of mitochondrial genome-encoded proteins, including at least some of the essential transmembrane subunits of the mitochondrial respiratory chain. The mitoribosomes are attached to the mitochondrial inner membrane and translation products are cotranslationally integrated into the membrane. In Saccharomyces cerevisiae (strain ATCC 204508 / S288c) (Baker's yeast), this protein is Large ribosomal subunit protein uL13m (MRPL23).